We begin with the raw amino-acid sequence, 302 residues long: Probable alpha-L-glutamate ligase (302 aa).

The ATP-grasp domain maps to 105 to 288; sequence LQLLARKGIP…LAGKIIEYIE (184 aa). ATP is bound by residues lysine 142, 179-180, aspartate 188, and 212-214; these read EF and RAN. Mg(2+) is bound by residues aspartate 249, glutamate 261, and asparagine 263. Residues aspartate 249, glutamate 261, and asparagine 263 each contribute to the Mn(2+) site.

This sequence belongs to the RimK family. Mg(2+) is required as a cofactor. It depends on Mn(2+) as a cofactor.

The protein is Probable alpha-L-glutamate ligase of Legionella pneumophila (strain Paris).